The chain runs to 820 residues: DNA mismatch repair protein MutS (820 aa).

618–625 lines the ATP pocket; the sequence is GPNMAGKS.

This sequence belongs to the DNA mismatch repair MutS family.

Functionally, this protein is involved in the repair of mismatches in DNA. It is possible that it carries out the mismatch recognition step. This protein has a weak ATPase activity. This chain is DNA mismatch repair protein MutS, found in Chlamydia trachomatis serovar A (strain ATCC VR-571B / DSM 19440 / HAR-13).